The following is a 46-amino-acid chain: uncharacterized protein (46 aa).

To equivalent protein in phage 82.

This is an uncharacterized protein from Escherichia coli (strain K12).